Reading from the N-terminus, the 1392-residue chain is DNA-directed RNA polymerase subunit beta' (1392 aa).

Residues cysteine 70, cysteine 72, cysteine 85, and cysteine 88 each coordinate Zn(2+). Residues aspartate 460, aspartate 462, and aspartate 464 each contribute to the Mg(2+) site. Cysteine 810, cysteine 884, cysteine 891, and cysteine 894 together coordinate Zn(2+).

Belongs to the RNA polymerase beta' chain family. In terms of assembly, the RNAP catalytic core consists of 2 alpha, 1 beta, 1 beta' and 1 omega subunit. When a sigma factor is associated with the core the holoenzyme is formed, which can initiate transcription. The cofactor is Mg(2+). Zn(2+) serves as cofactor.

It carries out the reaction RNA(n) + a ribonucleoside 5'-triphosphate = RNA(n+1) + diphosphate. Its function is as follows. DNA-dependent RNA polymerase catalyzes the transcription of DNA into RNA using the four ribonucleoside triphosphates as substrates. This is DNA-directed RNA polymerase subunit beta' from Geobacter metallireducens (strain ATCC 53774 / DSM 7210 / GS-15).